A 312-amino-acid polypeptide reads, in one-letter code: Probable carboxylesterase 7 (312 aa).

M1 bears the N-acetylmethionine mark. The Involved in the stabilization of the negatively charged intermediate by the formation of the oxyanion hole signature appears at 75 to 77 (HGG). Active-site residues include S159, D255, and H287.

This sequence belongs to the 'GDXG' lipolytic enzyme family. In terms of tissue distribution, expressed in leaves, stems, flowers and siliques.

It catalyses the reaction a carboxylic ester + H2O = an alcohol + a carboxylate + H(+). Functionally, carboxylesterase acting on esters with varying acyl chain length. This Arabidopsis thaliana (Mouse-ear cress) protein is Probable carboxylesterase 7 (CXE7).